Consider the following 154-residue polypeptide: Putative glutamine amidotransferase-like protein RP712 (154 aa).

The region spanning 1-94 is the Glutamine amidotransferase type-1 domain; that stretch reads MSIEKEKFWA…QQSVWSFHNK (94 aa).

This is Putative glutamine amidotransferase-like protein RP712 from Rickettsia prowazekii (strain Madrid E).